The following is a 305-amino-acid chain: Phosphoribosylaminoimidazole-succinocarboxamide synthase (305 aa).

It belongs to the SAICAR synthetase family.

It catalyses the reaction 5-amino-1-(5-phospho-D-ribosyl)imidazole-4-carboxylate + L-aspartate + ATP = (2S)-2-[5-amino-1-(5-phospho-beta-D-ribosyl)imidazole-4-carboxamido]succinate + ADP + phosphate + 2 H(+). The protein operates within purine metabolism; IMP biosynthesis via de novo pathway; 5-amino-1-(5-phospho-D-ribosyl)imidazole-4-carboxamide from 5-amino-1-(5-phospho-D-ribosyl)imidazole-4-carboxylate: step 1/2. This Tropheryma whipplei (strain TW08/27) (Whipple's bacillus) protein is Phosphoribosylaminoimidazole-succinocarboxamide synthase.